Consider the following 356-residue polypeptide: uncharacterized protein (356 aa).

A helical transmembrane segment spans residues 8–28 (ILGFVLFVLGAAIFLTEVMHS).

The protein to C.elegans C41C4.1 and C18B2.1.

Its subcellular location is the membrane. This is an uncharacterized protein from Caenorhabditis elegans.